The primary structure comprises 224 residues: uncharacterized protein (224 aa).

The 220-residue stretch at Ile2–Ile221 folds into the ABC transporter domain. Gly38–Ser45 contributes to the ATP binding site.

The protein belongs to the ABC transporter superfamily.

This is an uncharacterized protein from Methanocaldococcus jannaschii (strain ATCC 43067 / DSM 2661 / JAL-1 / JCM 10045 / NBRC 100440) (Methanococcus jannaschii).